The chain runs to 142 residues: Peptide methionine sulfoxide reductase MsrB (142 aa).

The MsrB domain maps to 2-125 (IKKNKEELND…NSAAIQFIPY (124 aa)). Cys114 functions as the Nucleophile in the catalytic mechanism.

This sequence belongs to the MsrB Met sulfoxide reductase family.

The catalysed reaction is L-methionyl-[protein] + [thioredoxin]-disulfide + H2O = L-methionyl-(R)-S-oxide-[protein] + [thioredoxin]-dithiol. The protein is Peptide methionine sulfoxide reductase MsrB of Staphylococcus epidermidis (strain ATCC 35984 / DSM 28319 / BCRC 17069 / CCUG 31568 / BM 3577 / RP62A).